A 352-amino-acid chain; its full sequence is Ion-translocating oxidoreductase complex subunit D (352 aa).

Transmembrane regions (helical) follow at residues 20–40 (IMLL…WFFG), 42–62 (GTLV…ALVL), 89–109 (IPPL…VIIA), and 123–143 (PAMI…TSWL). Residue Thr187 is modified to FMN phosphoryl threonine. Helical transmembrane passes span 214-234 (ILAG…GVWL), 242-262 (WHIP…GWLF), 267-287 (LASP…FFIL), 301-321 (LIFG…GGYP), and 322-342 (DGVA…DYYT).

It belongs to the NqrB/RnfD family. In terms of assembly, the complex is composed of six subunits: RsxA, RsxB, RsxC, RsxD, RsxE and RsxG. Requires FMN as cofactor.

It localises to the cell inner membrane. Functionally, part of a membrane-bound complex that couples electron transfer with translocation of ions across the membrane. Required to maintain the reduced state of SoxR. The polypeptide is Ion-translocating oxidoreductase complex subunit D (Escherichia coli O17:K52:H18 (strain UMN026 / ExPEC)).